A 182-amino-acid chain; its full sequence is ATP-dependent protease subunit HslV (182 aa).

The active site involves Thr-12. The Na(+) site is built by Ala-167, Cys-170, and Thr-173.

This sequence belongs to the peptidase T1B family. HslV subfamily. As to quaternary structure, a double ring-shaped homohexamer of HslV is capped on each side by a ring-shaped HslU homohexamer. The assembly of the HslU/HslV complex is dependent on binding of ATP.

It localises to the cytoplasm. The catalysed reaction is ATP-dependent cleavage of peptide bonds with broad specificity.. With respect to regulation, allosterically activated by HslU binding. Protease subunit of a proteasome-like degradation complex believed to be a general protein degrading machinery. This chain is ATP-dependent protease subunit HslV, found in Prosthecochloris aestuarii (strain DSM 271 / SK 413).